The sequence spans 595 residues: Mitoguardin 1 (595 aa).

Helical transmembrane passes span 11-31 (LPIK…YYSL) and 38-58 (TGTK…IIIA).

This sequence belongs to the mitoguardin family. As to quaternary structure, homodimer and heterodimer; forms heterodimers with miga2.

It localises to the mitochondrion outer membrane. Functionally, regulator of mitochondrial fusion: acts by forming homo- and heterodimers at the mitochondrial outer membrane and facilitating the formation of pld6/MitoPLD dimers. May act by regulating phospholipid metabolism via pld6/MitoPLD. This Danio rerio (Zebrafish) protein is Mitoguardin 1.